The primary structure comprises 532 residues: SET and MYND domain-containing protein DDB_G0288495 (532 aa).

Residues 25–448 (PWIEVKSVSE…ENQELLITYI (424 aa)) enclose the SET domain. An MYND-type; degenerate zinc finger spans residues 70–116 (CTTCFKILLESNRHNFQTCPSCFQVNYCSNYCKQYSKIETKHTELEC). The stretch at 199–240 (INSKNNNEFENEEEEEEEQEQKGEGEQEENENNENNEKVKKK) forms a coiled coil. The interval 204–234 (NNEFENEEEEEEEQEQKGEGEQEENENNENN) is disordered. Residues 207 to 217 (FENEEEEEEEQ) show a composition bias toward acidic residues.

Belongs to the class V-like SAM-binding methyltransferase superfamily.

Its function is as follows. Probable methyltransferase. This is SET and MYND domain-containing protein DDB_G0288495 from Dictyostelium discoideum (Social amoeba).